The primary structure comprises 145 residues: Immunoglobulin iota chain (145 aa).

The signal sequence occupies residues 1 to 19 (MSWAPVLLMLFVYCTGCGP). A framework-1 region spans residues 20-41 (QPVLHQPPAMSSALGTTIRLTC). The region spanning 20-132 (QPVLHQPPAM…EKEEREREWE (113 aa)) is the Ig-like V-type domain. An intrachain disulfide couples cysteine 41 to cysteine 115. The tract at residues 42–56 (TLRNDHDIGVYSVYW) is complementarity-determining-1. The segment at 57 to 70 (YQQRPGHPPRFLLR) is framework-2. Positions 71-81 (YFSQSDKSQGP) are complementarity-determining-2. Residues 82–115 (QVPPRFSGSKDVARNRGYLSISELQPEDEAMYYC) form a framework-3 region. The span at 121 to 130 (SSEKEERERE) shows a compositional bias: basic and acidic residues. A disordered region spans residues 121 to 145 (SSEKEEREREWEEEMEPTAARTRVP).

Belongs to the immunoglobulin superfamily. Interacts with IGLL1. Interacts with SYNV1/HRD1 (via N-terminus); this interaction leads to increased VPREB1 ubiquitination and degradation in pre-B cells, possibly through a lysosomal, not proteasomal, pathway. Only expressed by pre-B-cells.

Its subcellular location is the endoplasmic reticulum. In terms of biological role, associates with the Ig-mu chain to form a molecular complex that is expressed on the surface of pre-B-cells. This complex presumably regulates Ig gene rearrangements in the early steps of B-cell differentiation. In Homo sapiens (Human), this protein is Immunoglobulin iota chain (VPREB1).